The sequence spans 55 residues: Large ribosomal subunit protein bL33 (55 aa).

The protein belongs to the bacterial ribosomal protein bL33 family.

The sequence is that of Large ribosomal subunit protein bL33 from Azorhizobium caulinodans (strain ATCC 43989 / DSM 5975 / JCM 20966 / LMG 6465 / NBRC 14845 / NCIMB 13405 / ORS 571).